The following is a 606-amino-acid chain: Melanoma-associated antigen D2 (606 aa).

The segment at 1–204 (MSDTSESGAG…QASGTTGGRR (204 aa)) is disordered. Residue S2 is modified to N-acetylserine. The residue at position 5 (S5) is a Phosphoserine. Over residues 24-37 (SSMMQTLLTVTQNV) the composition is skewed to polar residues. Residue T72 is modified to Phosphothreonine. Residues 81-93 (TQASSTTQLTDTQ) are compositionally biased toward polar residues. The span at 122–131 (ETKKVSHVAD) shows a compositional bias: basic and acidic residues. The span at 142-164 (EAAPSQAPADEPEPESAAAQSQE) shows a compositional bias: low complexity. S157 is subject to Phosphoserine. A compositionally biased stretch (basic residues) spans 171-181 (KVKAKKARKVK). Phosphoserine is present on residues S190, S191, S194, S197, S244, and S247. Basic residues predominate over residues 248–260 (PKARRGKARRRAA). Residues 248–275 (PKARRGKARRRAAKLQSSQEPEAPPPRD) form a disordered region. Phosphoserine is present on residues S264 and S265. The MAGE domain occupies 279 to 478 (LQGRANDLVK…KEWAAQYREA (200 aa)). The disordered stretch occupies residues 534–563 (GAEAKAKAQESGSASTGASTSTNNSASASA).

As to quaternary structure, interacts with GNAS. May interact with DNAJB1. As to expression, widely expressed. In the developing and adult kidney, expressed in the thick ascending limb of the loop of Henle and the distal convoluted tubules outside the loop.

In terms of biological role, regulates the expression, localization to the plasma membrane and function of the sodium chloride cotransporters SLC12A1 and SLC12A3, two key components of salt reabsorption in the distal renal tubule. The polypeptide is Melanoma-associated antigen D2 (MAGED2) (Homo sapiens (Human)).